Here is a 626-residue protein sequence, read N- to C-terminus: Janus kinase and microtubule-interacting protein 1 (626 aa).

The segment at 1–22 (MSKKGRSKGEKPEMETDAVQMA) is disordered. The mediates association with microtubules stretch occupies residues 1–365 (MSKKGRSKGE…KIKNLTRENV (365 aa)). Coiled-coil stretches lie at residues 19-255 (VQMA…EAER) and 284-413 (ERDV…DDLS). Positions 365–626 (VEMKEKLSAQ…ILFEPKLKFM (262 aa)) are mediates interaction with TYK2 and GABBR1. Ser-382 carries the phosphoserine modification. Residues 452 to 461 (ETLSETSYNT) show a composition bias toward polar residues. The disordered stretch occupies residues 452–477 (ETLSETSYNTDRTDRTPATPEEDLDD). Thr-470 carries the phosphothreonine modification. Residues 490-604 (QLTREYQALQ…EFRVLELEVR (115 aa)) are a coiled coil.

Belongs to the JAKMIP family. Homodimer. Forms a complex with GABBR1 and KIF5B/kinesin-1. Interacts with JAK1 and TYK2. Predominantly expressed in neural tissues and lymphoid cells (at protein level). Isoform 2, isoform 3 and isoform 4 are specifically expressed in brain and retina. Isoform 1 and isoform 5 are also detected in liver, lung and skeletal muscle. Also detected in testis and to a lower extent spleen and intestine.

It is found in the cytoplasm. The protein localises to the cytoskeleton. The protein resides in the membrane. Associates with microtubules and may play a role in the microtubule-dependent transport of the GABA-B receptor. May play a role in JAK1 signaling and regulate microtubule cytoskeleton rearrangements. The sequence is that of Janus kinase and microtubule-interacting protein 1 (JAKMIP1) from Homo sapiens (Human).